The chain runs to 66 residues: uncharacterized protein (66 aa).

This is an uncharacterized protein from Schizosaccharomyces pombe (strain 972 / ATCC 24843) (Fission yeast).